Reading from the N-terminus, the 1343-residue chain is Vascular endothelial growth factor receptor 2 (1343 aa).

Residues M1 to A19 form the signal peptide. Residues A20 to E760 are Extracellular-facing. 5 N-linked (GlcNAc...) asparagine glycosylation sites follow: N46, N96, N143, N158, and N245. 7 Ig-like C2-type domains span residues N46–D109, N141–E207, Y224–T320, P328–S414, P421–S540, P547–Q654, and P663–I749. An intrachain disulfide couples C53 to C103. Cysteines 150 and 200 form a disulfide. Cysteines 246 and 307 form a disulfide. Residues N318, N374, N395, N507, N576, N609, N615, N627, N671, N700, and N717 are each glycosylated (N-linked (GlcNAc...) asparagine). 2 cysteine pairs are disulfide-bonded: C445–C526 and C567–C638. A disulfide bridge links C684 with C733. A helical transmembrane segment spans residues V761 to L781. Topologically, residues V782–V1343 are cytoplasmic. Y797 carries the phosphotyrosine modification. Residues L830–N1158 form the Protein kinase domain. Residues L836 to V844 and K864 contribute to the ATP site. A Phosphotyrosine; by autocatalysis modification is found at Y947. S978 and S980 each carry phosphoserine. The residue at position 992 (Y992) is a Phosphotyrosine; by autocatalysis. C1020 and C1041 are oxidised to a cystine. D1024 functions as the Proton acceptor in the catalytic mechanism. 4 positions are modified to phosphotyrosine; by autocatalysis: Y1050, Y1055, Y1171, and Y1210. A phosphoserine mark is found at S1227 and S1231. T1234 is modified (phosphothreonine). The tract at residues T1267–V1314 is disordered. Over residues S1292–Y1305 the composition is skewed to polar residues. 3 positions are modified to phosphotyrosine; by autocatalysis: Y1301, Y1305, and Y1315.

It belongs to the protein kinase superfamily. Tyr protein kinase family. CSF-1/PDGF receptor subfamily. In terms of assembly, homodimer in the presence of bound dimeric VEGFA, VEGFC or VEGFD ligands; monomeric in the absence of bound ligands. Can also form heterodimers with FLT1/VEGFR1 and KDR/VEGFR2. Interacts (tyrosine phosphorylated) with LFYN, NCK1, PLCG1. Interacts (tyrosine-phosphorylated active form preferentially) with DAB2IP (via C2 domain and active form preferentially); the interaction occurs at the late phase of VEGFA response and inhibits KDR/VEGFR2 activity. Interacts with SHBSH2D2A/TSAD, GRB2, MYOF, CBL and PDCD6. Interacts (via C-terminus domain) with ERN1 (via kinase domain); the interaction is facilitated in a XBP1- and vascular endothelial growth factor (VEGF)-dependent manner in endothelial cells. Interacts (via juxtamembrane region) with chaperone PDCL3 (via thioredoxin fold region); the interaction leads to increased KDR/VEGFR2 abundance through inhibition of its ubiquitination and degradation. Interacts (tyrosine phosphorylated) with CCDC88A/GIV (via SH2-like region); binding requires autophosphorylation of the KDR/VEGFR2 C-terminal region. Interacts with isoform 2 of BSG. Interacts with SLC31A1; this interaction is induced upon VEGFA stimulation leading to SLC31A1 and KDR subsequent co-internalization to early endosomes, thereby activating KDR downstream signaling in endothelial cells. In terms of processing, N-glycosylated. Post-translationally, ubiquitinated. Tyrosine phosphorylation of the receptor promotes its poly-ubiquitination, leading to its degradation via the proteasome or lysosomal proteases. Autophosphorylated on tyrosine residues upon ligand binding. Autophosphorylation occurs in trans, i.e. one subunit of the dimeric receptor phosphorylates tyrosine residues on the other subunit. Phosphorylation at Tyr-947 is important for interaction with SH2D2A/TSAD and VEGFA-mediated reorganization of the actin cytoskeleton. Phosphorylation at Tyr-1171 is important for interaction with PLCG1 and SHB. Phosphorylation at Tyr-1210 is important for interaction with NCK1 and FYN. Dephosphorylated by PTPRB. Dephosphorylated by PTPRJ at Tyr-797, Tyr-947, Tyr-992, Tyr-1050, Tyr-1055, Tyr-1171 and Tyr-1210. In terms of processing, the inhibitory disulfide bond between Cys-1020 and Cys-1041 may serve as a specific molecular switch for H(2)S-induced modification that regulates KDR/VEGFR2 function. In terms of tissue distribution, expressed in the post-pubertal mammary glands.

Its subcellular location is the cell membrane. It localises to the cytoplasm. The protein localises to the nucleus. It is found in the cytoplasmic vesicle. The protein resides in the early endosome. Its subcellular location is the cell junction. It localises to the endoplasmic reticulum. The enzyme catalyses L-tyrosyl-[protein] + ATP = O-phospho-L-tyrosyl-[protein] + ADP + H(+). Present in an inactive conformation in the absence of bound ligand. Binding of VEGFA, VEGFC or VEGFD leads to dimerization and activation by autophosphorylation on tyrosine residues. May be regulated by hydrogen sulfide (H(2)S) levels via a sensitive intracellular disulfide bond. Functionally, tyrosine-protein kinase that acts as a cell-surface receptor for VEGFA, VEGFC and VEGFD. Plays an essential role in the regulation of angiogenesis, vascular development, vascular permeability, and embryonic hematopoiesis. Promotes proliferation, survival, migration and differentiation of endothelial cells. Promotes reorganization of the actin cytoskeleton. Isoforms lacking a transmembrane domain may function as decoy receptors for VEGFA, VEGFC and/or VEGFD. Modulates FLT1 and FLT4 signaling by forming heterodimers. Binding of vascular growth factors to isoform 1 leads to the activation of several signaling cascades. Activation of PLCG1 leads to the production of the cellular signaling molecules diacylglycerol and inositol-1,4,5-trisphosphate and the activation of protein kinase C. Mediates activation of MAPK1/ERK2, MAPK3/ERK1 and the MAP kinase signaling pathway, as well as of the AKT1 signaling pathway. Mediates phosphorylation of PIK3R1, the regulatory subunit of phosphatidylinositol 3-kinase, reorganization of the actin cytoskeleton and activation of PTK2/FAK1. Required for VEGFA-mediated induction of NOS2 and NOS3, leading to the production of the signaling molecule nitric oxide (NO) by endothelial cells. Phosphorylates PLCG1. Promotes phosphorylation of FYN, NCK1, NOS3, PIK3R1, PTK2/FAK1 and SRC. This chain is Vascular endothelial growth factor receptor 2, found in Rattus norvegicus (Rat).